Consider the following 76-residue polypeptide: MLQLVNDNGLVVNVILWLFVLFFLLIISITFVQLVNLCFTCHRLCNSAVYTPIGRLYRVYKSYMRIDPLPSTVIDV.

Over 1–14 (MLQLVNDNGLVVNV) the chain is Virion surface. Residues 15 to 35 (ILWLFVLFFLLIISITFVQLV) form a helical membrane-spanning segment. Residues 36–76 (NLCFTCHRLCNSAVYTPIGRLYRVYKSYMRIDPLPSTVIDV) are Intravirion-facing.

The protein belongs to the alphacoronaviruses E protein family. As to quaternary structure, homopentamer. Interacts with membrane protein M in the budding compartment of the host cell, which is located between endoplasmic reticulum and the Golgi complex. Interacts with Nucleoprotein. Interacts with host IRF3; this interaction inhibits type I IFN production.

It localises to the host Golgi apparatus membrane. The protein localises to the host endoplasmic reticulum. Functionally, plays a central role in virus morphogenesis and assembly. Acts as a viroporin and self-assembles in host membranes forming pentameric protein-lipid pores that allow ion transport. Also plays a role in the induction of apoptosis. Counteracts the production of type I interferon by interacting with host IRF3 component and preventing its translocation to the host nucleus. In Sus scrofa (Pig), this protein is Envelope small membrane protein.